Here is a 549-residue protein sequence, read N- to C-terminus: Arginine--tRNA ligase (549 aa).

The 'HIGH' region signature appears at 132-142; the sequence is ANPTGPLHLAH.

Belongs to the class-I aminoacyl-tRNA synthetase family. In terms of assembly, monomer.

It localises to the cytoplasm. It catalyses the reaction tRNA(Arg) + L-arginine + ATP = L-arginyl-tRNA(Arg) + AMP + diphosphate. The protein is Arginine--tRNA ligase of Renibacterium salmoninarum (strain ATCC 33209 / DSM 20767 / JCM 11484 / NBRC 15589 / NCIMB 2235).